A 171-amino-acid chain; its full sequence is MTKQNAFTREDLLRCSRGELFGPGNAQLPAPNMLMVDRITHISEEGGKYGKGELVAELDITPDLWFFACHFEGDPVMPGCLGLDAMWQLVGFFLGWQGLPGRGRALGSGEVKFFGQVLPTAKKVTYNIHIKRVLKGKLNMAIADGSVSVDGREIYTAEGLRVGVFTSTDNF.

H70 is an active-site residue.

This sequence belongs to the thioester dehydratase family. FabA subfamily. Homodimer.

Its subcellular location is the cytoplasm. It carries out the reaction a (3R)-hydroxyacyl-[ACP] = a (2E)-enoyl-[ACP] + H2O. The catalysed reaction is (3R)-hydroxydecanoyl-[ACP] = (2E)-decenoyl-[ACP] + H2O. It catalyses the reaction (2E)-decenoyl-[ACP] = (3Z)-decenoyl-[ACP]. It participates in lipid metabolism; fatty acid biosynthesis. In terms of biological role, necessary for the introduction of cis unsaturation into fatty acids. Catalyzes the dehydration of (3R)-3-hydroxydecanoyl-ACP to E-(2)-decenoyl-ACP and then its isomerization to Z-(3)-decenoyl-ACP. Can catalyze the dehydratase reaction for beta-hydroxyacyl-ACPs with saturated chain lengths up to 16:0, being most active on intermediate chain length. The polypeptide is 3-hydroxydecanoyl-[acyl-carrier-protein] dehydratase (Pseudomonas fluorescens (strain ATCC BAA-477 / NRRL B-23932 / Pf-5)).